The primary structure comprises 348 residues: Protein RecA (348 aa).

An ATP-binding site is contributed by 65 to 72 (GPESSGKT).

It belongs to the RecA family.

It localises to the cytoplasm. Its function is as follows. Can catalyze the hydrolysis of ATP in the presence of single-stranded DNA, the ATP-dependent uptake of single-stranded DNA by duplex DNA, and the ATP-dependent hybridization of homologous single-stranded DNAs. It interacts with LexA causing its activation and leading to its autocatalytic cleavage. The sequence is that of Protein RecA from Vibrio anguillarum (strain ATCC 68554 / 775) (Listonella anguillarum).